The primary structure comprises 330 residues: Embigin (330 aa).

Residues 1–33 (MRSHTGLRALVAPGYPLLLLCLLAATRPDPAEG) form the signal peptide. Over 34–254 (DPTDPTFTSL…QLGESEEQNE (221 aa)) the chain is Extracellular. Ig-like V-type domains lie at 38–161 (PTFT…IHVP) and 162–256 (KAHG…NELV). N-linked (GlcNAc...) asparagine glycosylation is found at asparagine 55, asparagine 62, asparagine 70, asparagine 101, asparagine 118, asparagine 191, asparagine 198, asparagine 216, and asparagine 221. Disulfide bonds link cysteine 89–cysteine 145 and cysteine 182–cysteine 240. A helical transmembrane segment spans residues 255–283 (LVVLSFLVPLKPFLAILAEVILLVAIILL). The Cytoplasmic segment spans residues 284–330 (CEVYTHKKKNDPDAGKEFEQIEQLKSDDSNGIENNVPRYRKTDSADQ). The span at 293–311 (NDPDAGKEFEQIEQLKSDD) shows a compositional bias: basic and acidic residues. Positions 293–330 (NDPDAGKEFEQIEQLKSDDSNGIENNVPRYRKTDSADQ) are disordered. The residue at position 312 (serine 312) is a Phosphoserine.

Interacts with SLC16A1, SLC16A6 and SLC16A7. As to expression, only member of the immunoglobulin superfamily to be expressed in embryonal carcinoma cells, which resemble multipotential cells of early embryos.

It is found in the cell membrane. It localises to the synapse. Its function is as follows. Plays a role in targeting the monocarboxylate transporters SLC16A1, SLC16A6 and SLC16A7 to the cell membrane. Plays a role in the outgrowth of motoneurons and in the formation of neuromuscular junctions. Following muscle denervation, promotes nerve terminal sprouting and the formation of additional acetylcholine receptor clusters at synaptic sites without affecting terminal Schwann cell number or morphology. Delays the retraction of terminal sprouts following re-innervation of denervated endplates. The polypeptide is Embigin (Emb) (Mus musculus (Mouse)).